The chain runs to 1234 residues: ATP-dependent helicase/nuclease subunit A (1234 aa).

Positions 2–475 (TQFTTSQQAA…IILAENFRST (474 aa)) constitute a UvrD-like helicase ATP-binding domain. An ATP-binding site is contributed by 23 to 30 (ASAGSGKT). Positions 507 to 806 (YGALDYGDAH…KLMTIHKSKG (300 aa)) constitute a UvrD-like helicase C-terminal domain.

It belongs to the helicase family. AddA subfamily. In terms of assembly, heterodimer of AddA and AddB/RexB. Mg(2+) serves as cofactor.

The enzyme catalyses Couples ATP hydrolysis with the unwinding of duplex DNA by translocating in the 3'-5' direction.. The catalysed reaction is ATP + H2O = ADP + phosphate + H(+). Its function is as follows. The heterodimer acts as both an ATP-dependent DNA helicase and an ATP-dependent, dual-direction single-stranded exonuclease. Recognizes the chi site generating a DNA molecule suitable for the initiation of homologous recombination. The AddA nuclease domain is required for chi fragment generation; this subunit has the helicase and 3' -&gt; 5' nuclease activities. This is ATP-dependent helicase/nuclease subunit A from Lacticaseibacillus paracasei (strain ATCC 334 / BCRC 17002 / CCUG 31169 / CIP 107868 / KCTC 3260 / NRRL B-441) (Lactobacillus paracasei).